A 439-amino-acid polypeptide reads, in one-letter code: MSKIIGKIGRLPKTLYEHKKKTIFFSFLGYLGADWVYRWDRNQGIRKEYAKIAVKYGETTVSPETRPKRVFVLVNVEGNSRGCFDQFNKNALPLFHLAGVQVDVVKADNQAQLEALAGAVDTQEADILYVVGGDGTIGTVVTGIFRNREKAQLPVGFYPGGYDNLWLKRMLPSVFENSDDVRHACETAMAVIEDQKKSVYAFELTTEGSTLAPEYGLGDVSAGWFRQIEDTRKKFWYFSMAKRRWAYFWEMLKRGPAPIECHVEYEETCAGCEKCRPKPIIEAPQWRWWHVLTGTPKYKNNDGQKDYTGIINEKCGEKHELDTHGAEFLIENEQMSDYSQIRFRMGGTDIGRFGVISDGFKRCSEGIVGRSTDEKFYGTDFLANSVAFKISALPSYIHRLYISSNATPKDAELTDRQITIRGTQKKLDIFLPTSIRLEL.

A DAGKc domain is found at 65–208 (TRPKRVFVLV…VYAFELTTEG (144 aa)).

This is an uncharacterized protein from Caenorhabditis elegans.